The sequence spans 376 residues: Multiphosphoryl transfer protein (376 aa).

A PTS EIIA type-2 domain is found at 2-142 (FQLSVQDIHP…EELRALLMGE (141 aa)). His-62 acts as the Tele-phosphohistidine intermediate; for EIIA activity in catalysis. Phosphohistidine; by HPr is present on His-62. Residues 156 to 284 (TLDVIASSLV…LTSDDALTDD (129 aa)) form a m domain region. Positions 285-375 (VLSAEFVVRN…DAIAAGLGEG (91 aa)) constitute an HPr domain. Residue His-299 is the Pros-phosphohistidine intermediate; for HPr activity of the active site. Residue His-299 is modified to Phosphohistidine; by EI.

The protein resides in the cytoplasm. In terms of biological role, the phosphoenolpyruvate-dependent sugar phosphotransferase system (sugar PTS), a major carbohydrate active transport system, catalyzes the phosphorylation of incoming sugar substrates concomitantly with their translocation across the cell membrane. The enzyme II FruAB PTS system is involved in fructose transport. The polypeptide is Multiphosphoryl transfer protein (fruB) (Salmonella typhi).